Consider the following 366-residue polypeptide: Proline-rich protein 19 (366 aa).

Disordered stretches follow at residues 1–53 (MDPR…RDPC), 102–149 (ESHT…DLPV), 256–286 (TPAH…AAWG), and 301–338 (ATPP…WSPN). Positions 18 to 29 (GRIRRRKTRRER) are enriched in basic residues. Polar residues-rich tracts occupy residues 104-113 (HTPQLPTKPS) and 256-265 (TPAHRGSQVQ). A compositionally biased stretch (low complexity) spans 275–286 (SSASSPSGAAWG). Over residues 302–326 (TPPPPPPQPWDVRPPQPLPQPPSPL) the composition is skewed to pro residues.

In terms of assembly, interacts with CNTD1. As to expression, preferentially expressed in gonads.

It is found in the nucleus. The protein localises to the chromosome. Its function is as follows. Promotes meiotic crossing over formation through its interaction with CNTD1 by participating in the crossover differentiation step of crossover-specific recombination intermediates. This Mus musculus (Mouse) protein is Proline-rich protein 19.